A 358-amino-acid polypeptide reads, in one-letter code: Putative hydrogenase expression/formation protein MJ0993 (358 aa).

Positions 33, 61, and 64 each coordinate Fe cation.

The protein belongs to the HypD family.

In Methanocaldococcus jannaschii (strain ATCC 43067 / DSM 2661 / JAL-1 / JCM 10045 / NBRC 100440) (Methanococcus jannaschii), this protein is Putative hydrogenase expression/formation protein MJ0993.